Here is a 117-residue protein sequence, read N- to C-terminus: MARVKRGVMVRKRHKKLLEQAKGYRGSRSRRVKVARETVMKALWYAYRDRRNRKRDFRRLWIIRINAAARMHGMSYSRLMNGLKRAGIELDRKVLADMAVRDPAAFGRVVEQAQQVV.

Belongs to the bacterial ribosomal protein bL20 family.

Functionally, binds directly to 23S ribosomal RNA and is necessary for the in vitro assembly process of the 50S ribosomal subunit. It is not involved in the protein synthesizing functions of that subunit. The sequence is that of Large ribosomal subunit protein bL20 from Roseiflexus castenholzii (strain DSM 13941 / HLO8).